The following is a 368-amino-acid chain: MVISPHSSVSPVASPSRPRIVAALSGGVDSSTVAALLQEQGYAVEGVTLWLMRGKGQCCTEGLVDAAAVCEQLGIPHHVVDSRELFQANIVDYLVAGYAEGITPLPCSQCNKLVKFGPLLAYAREKLGISQMATGHYARVRFNAELGRYQLLRAVDRQKDQSYFLYDLSQEHLAHSLFPLGEYTKAQTRQLAARYGLVTADKPESQDLCLIETYGSMRSFLDQYLGQRPGEIVDTQGRVLGSHEGIHHYTVGQRKGLGIASSRPLYVVRIDAAMNRVVVGEREEATQAEAWVSQVNWVSIPAPTGSLAVEVQVRYRTPPVPAMVIPESPERVKLQFAEPQFGVTPGQAAVWYHGDLLLGGGILERPSP.

ATP-binding positions include Ala-23 to Ser-30 and Leu-49. Cys-110 acts as the Nucleophile in catalysis. The cysteines at positions 110 and 209 are disulfide-linked. Gly-135 contacts ATP. The interval Lys-159 to Gln-161 is interaction with tRNA. The active-site Cysteine persulfide intermediate is Cys-209. Residues Arg-314–Tyr-315 form an interaction with tRNA region.

It belongs to the MnmA/TRMU family.

The protein localises to the cytoplasm. It carries out the reaction S-sulfanyl-L-cysteinyl-[protein] + uridine(34) in tRNA + AH2 + ATP = 2-thiouridine(34) in tRNA + L-cysteinyl-[protein] + A + AMP + diphosphate + H(+). Catalyzes the 2-thiolation of uridine at the wobble position (U34) of tRNA, leading to the formation of s(2)U34. This chain is tRNA-specific 2-thiouridylase MnmA, found in Synechococcus sp. (strain JA-2-3B'a(2-13)) (Cyanobacteria bacterium Yellowstone B-Prime).